The primary structure comprises 146 residues: Lysozyme-like protein 4 (146 aa).

An N-terminal signal peptide occupies residues 1-19; that stretch reads MKASVVLSLLGYLVVPSGA. Positions 20 to 146 constitute a C-type lysozyme domain; the sequence is YILGRCTVAK…LARWLDGCKL (127 aa). 4 cysteine pairs are disulfide-bonded: C25/C144, C49/C131, C84/C96, and C92/C110. E54 is an active-site residue.

The protein belongs to the glycosyl hydrolase 22 family. Monomer. As to expression, expressed in testis and epididymis.

Its subcellular location is the secreted. It localises to the cytoplasmic vesicle. The protein resides in the secretory vesicle. The protein localises to the acrosome. It is found in the cell projection. Its subcellular location is the cilium. It localises to the flagellum. May be involved in fertilization. Has no detectable bacteriolytic and lysozyme activities in vitro. The sequence is that of Lysozyme-like protein 4 (LYZL4) from Homo sapiens (Human).